We begin with the raw amino-acid sequence, 1910 residues long: Endoribonuclease dcr-1 (1910 aa).

Positions 20-201 constitute a Helicase ATP-binding domain; it reads LLDKATKKNT…KLMEQLKKLE (182 aa). 33 to 40 lines the ATP pocket; that stretch reads LGTGSGKT. The DEAH box motif lies at 145 to 148; it reads DECH. The region spanning 371-542 is the Helicase C-terminal domain; sequence EFQKERMKLE…TVNNPIEDDS (172 aa). One can recognise a Dicer dsRNA-binding fold domain in the interval 571-667; that stretch reads AIALINRYCS…LPKGRESIAK (97 aa). In terms of domain architecture, PAZ spans 845 to 1003; sequence YVSEVVANME…LVPELMDIHP (159 aa). Disordered stretches follow at residues 951–988, 1227–1248, and 1272–1309; these read RIQN…VPHS, TASS…KQLT, and LEMS…PTNF. Composition is skewed to polar residues over residues 970–988 and 1227–1245; these read IPQA…VPHS and TASS…SPPK. A coiled-coil region spans residues 1245-1280; that stretch reads KQLTKEEEQFKKLQNDLLKQAKERLEALEMSEDMEK. Positions 1272 to 1286 are enriched in basic and acidic residues; that stretch reads LEMSEDMEKPRRLED. Over residues 1288–1304 the composition is skewed to acidic residues; the sequence is VNLEDYGDDQENQEDEN. 2 RNase III domains span residues 1381–1589 and 1643–1805; these read VSHI…LTLG and FTQL…LDSG. Positions 1682, 1791, and 1794 each coordinate Mg(2+). The 64-residue stretch at 1833-1896 folds into the DRBM domain; the sequence is SPIRELMEFE…AKRALKYLHQ (64 aa).

This sequence belongs to the helicase family. Dicer subfamily. As to quaternary structure, component of the ERI/DICER complex at least composed of dcr-1, rrf-3 and eri-1. Interacts with pir-1. It depends on Mg(2+) as a cofactor. Requires Mn(2+) as cofactor.

Component of the ERI/DICER complex which is involved in processing amplified double-stranded RNA (dsRNA) intermediates during small-RNA-mediated gene-silencing or RNA interference (RNAi). Involved in cleaving dsRNA in the RNAi pathway. It produces 21 to 23 bp dsRNAs (siRNAs) which target the selective destruction of homologous RNAs. Seems to process the precursor of the small temporal RNA let-7 which is involved in developmental timing. Required for avoidance behavior induced by small RNAs derived from pathogenic bacteria such as P.aeruginosa. Involved in innate immunity through its role in small RNA processing. Functionally, tDCR-1 acts as a deoxyribonuclease (DNase) initiating DNA fragmentation during apoptosis, upstream of nucleases cps-6, crn-2 and nuc-1. This Caenorhabditis elegans protein is Endoribonuclease dcr-1.